Reading from the N-terminus, the 878-residue chain is Pyruvate, phosphate dikinase (878 aa).

Residues 1–347 (MKKLIYYFGS…LYILQTRTAK (347 aa)) form an N-terminal region. Arg96 is an ATP binding site. The tract at residues 348–404 (RTAIAAINIAVQMVEEKLISKEQALMRIDPESLNQLLHTRIDYSKGLTSIAEGLPAS) is linker 1. A central region spans residues 405-502 (PGAATGIAVF…VIKQGDIITI (98 aa)). Phosphothreonine; by PDRP1 is present on Thr457. The active-site Tele-phosphohistidine intermediate is His459. Residues 503–537 (DGGSGKIFLGEMPLIQPTFSEESKLILDWADEISS) are linker 2. The interval 538–878 (LKVRANAETV…AAAQAKIKHG (341 aa)) is C-terminal. Residues Arg565, Arg621, Glu749, Gly770, Thr771, Asn772, and Asp773 each coordinate substrate. Glu749 contributes to the Mg(2+) binding site. Mg(2+) is bound at residue Asp773. Cys835 serves as the catalytic Proton donor.

It belongs to the PEP-utilizing enzyme family. Homodimer. Requires Mg(2+) as cofactor. In terms of processing, phosphorylation of Thr-457 in the dark inactivates the enzyme. Dephosphorylation upon light stimulation reactivates the enzyme.

The catalysed reaction is pyruvate + phosphate + ATP = phosphoenolpyruvate + AMP + diphosphate + H(+). Its activity is regulated as follows. Activated by light-induced dephosphorylation. Inhibited by dark-induced phosphorylation. Both reactions are catalyzed by PDRP1. Functionally, catalyzes the reversible phosphorylation of pyruvate and phosphate. The polypeptide is Pyruvate, phosphate dikinase (ppdK) (Rickettsia conorii (strain ATCC VR-613 / Malish 7)).